A 426-amino-acid chain; its full sequence is Fc receptor-like B (426 aa).

A signal peptide spans 1 to 17 (MWPLTALLLLVPSSGQA). 2 Ig-like C2-type domains span residues 23-101 (PILS…LSVS) and 103-189 (DWLI…VAVT). 2 disulfide bridges follow: C44–C85 and C124–C168. An N-linked (GlcNAc...) asparagine glycan is attached at N152. A disordered region spans residues 400–426 (ELRGTPETPTSHFAVSPGTPETTPVES). The span at 406–426 (ETPTSHFAVSPGTPETTPVES) shows a compositional bias: polar residues.

Expressed at low levels. Expressed in B-lymphocytes. Detected in tonsil, lung, kidney, spleen and placenta. Expressed by a small subset of germinal center B-cells in tonsils and by melanocytes (at protein level).

It localises to the cytoplasm. Its subcellular location is the endoplasmic reticulum. The chain is Fc receptor-like B (FCRLB) from Homo sapiens (Human).